We begin with the raw amino-acid sequence, 508 residues long: TATA box-binding protein-like 1 (508 aa).

Disordered stretches follow at residues 145–190, 236–262, and 456–479; these read QISY…QMHH, EPIPVKIEVPDVPPEGTSAANEEPMPD, and QKKRKRKAPVNRGPPIKRERFDDS.

Belongs to the TBP family.

It localises to the nucleus. May be a general transcription factor. Plays an essential role for RNA polymerase II/ama-1 transcription in early embryos whereby it activates a subset of RNA polymerase II promoters and facilitates the reestablishment of transcription after mitosis. This Caenorhabditis elegans protein is TATA box-binding protein-like 1.